Here is a 585-residue protein sequence, read N- to C-terminus: Cyclic nucleotide-binding domain-containing protein 2 (585 aa).

116–239 contributes to the a nucleoside 3',5'-cyclic phosphate binding site; the sequence is SYRNYAEPLQ…DAQYRFEFFR (124 aa).

The protein localises to the cytoplasm. It is found in the cytosol. In terms of biological role, essential for male fertility. Plays an important role in spermatogenesis and regulates sperm motility by controlling the development of the flagellar bending of sperm. The protein is Cyclic nucleotide-binding domain-containing protein 2 (CNBD2) of Macaca fascicularis (Crab-eating macaque).